The sequence spans 244 residues: DNA repair protein RecO (244 aa).

Belongs to the RecO family.

Its function is as follows. Involved in DNA repair and RecF pathway recombination. This is DNA repair protein RecO from Polynucleobacter asymbioticus (strain DSM 18221 / CIP 109841 / QLW-P1DMWA-1) (Polynucleobacter necessarius subsp. asymbioticus).